A 356-amino-acid polypeptide reads, in one-letter code: 1-acyl-sn-glycerol-3-phosphate acyltransferase LPAT1, chloroplastic (356 aa).

Residues 1–56 (MDVASARSISSHPSYYGKPICSSQSSLIRISRDKVCCFGRISNGMTSFTTSLHAVP) constitute a chloroplast transit peptide. Residues 127-147 (GIFFCVVAGISATFLIVLMII) traverse the membrane as a helical segment. The short motif at 202 to 207 (HQSFLD) is the HXXXXD motif element. A helical transmembrane segment spans residues 224–244 (TGIFVIPIIGWAMSMMGVVPL).

This sequence belongs to the 1-acyl-sn-glycerol-3-phosphate acyltransferase family. Widely expressed. Expressed at higher level in leaves. Expressed at lower level in silique walls compared to leaves.

It localises to the plastid. The protein localises to the chloroplast membrane. It carries out the reaction a fatty acyl-[ACP] + a 1-acyl-sn-glycero-3-phosphate = a 1,2-diacyl-sn-glycero-3-phosphate + holo-[ACP]. The catalysed reaction is a 1-acyl-sn-glycero-3-phosphate + an acyl-CoA = a 1,2-diacyl-sn-glycero-3-phosphate + CoA. It participates in phospholipid metabolism; CDP-diacylglycerol biosynthesis; CDP-diacylglycerol from sn-glycerol 3-phosphate: step 2/3. Its function is as follows. Plastidial enzyme of the prokaryotic glycerol-3-phosphate pathway that converts lysophosphatidic acid (LPA) into phosphatidic acid by incorporating an acyl moiety at position sn-2. Utilizes palmitoyl-ACP (16:0-ACP) to produce phosphatidic acid containing a saturated group at position sn-2, which is characteristic of lipids synthesized by the prokaryotic pathway. In vitro, can use 16:0-CoA as acyl donor. Essential for embryo development during the transition from the globular to the heart stage when chloroplasts begin to form. This Arabidopsis thaliana (Mouse-ear cress) protein is 1-acyl-sn-glycerol-3-phosphate acyltransferase LPAT1, chloroplastic.